The chain runs to 64 residues: Copper-metallothionein (64 aa).

Ser1 is subject to N-acetylserine. Cys7, Cys11, Cys16, Cys18, Cys22, Cys24, Cys28, Cys30, Cys33, Cys36, Cys38, Cys43, Cys45, Cys49, Cys55, Cys57, Cys61, and Cys63 together coordinate Cu(+).

It belongs to the metallothionein superfamily. Type 2 family.

Functionally, the metallothioneins are involved in the cellular sequestration of toxic metal ions and regulation of essential trace elements. This isoform binds exclusively copper. The protein is Copper-metallothionein of Helix pomatia (Roman snail).